The chain runs to 284 residues: Cell division protein FtsQ (284 aa).

Basic residues predominate over residues 1–10; the sequence is MAFGKSKNRR. Residues 1–23 are disordered; it reads MAFGKSKNRRRQDAAQQKEAVRG. Topologically, residues 1–34 are cytoplasmic; that stretch reads MAFGKSKNRRRQDAAQQKEAVRGAVRSQGPRALK. Residues 35-52 form a helical membrane-spanning segment; the sequence is VLGLTLGTGLLVWGGAAL. At 53-284 the chain is on the periplasmic side; sequence REWTLTSPRF…ASERSGASMR (232 aa). A POTRA domain is found at 62-130; it reads FELEAVSFSG…NRVSVEVTEH (69 aa).

This sequence belongs to the FtsQ/DivIB family. FtsQ subfamily.

The protein resides in the cell inner membrane. Its function is as follows. Essential cell division protein. This Myxococcus fulvus (strain ATCC BAA-855 / HW-1) protein is Cell division protein FtsQ.